The following is a 219-amino-acid chain: NAD(P)H-quinone oxidoreductase subunit K 2 (219 aa).

Cys53, Cys54, Cys118, and Cys149 together coordinate [4Fe-4S] cluster.

This sequence belongs to the complex I 20 kDa subunit family. In terms of assembly, NDH-1 can be composed of about 15 different subunits; different subcomplexes with different compositions have been identified which probably have different functions. Requires [4Fe-4S] cluster as cofactor.

Its subcellular location is the cellular thylakoid membrane. The catalysed reaction is a plastoquinone + NADH + (n+1) H(+)(in) = a plastoquinol + NAD(+) + n H(+)(out). It carries out the reaction a plastoquinone + NADPH + (n+1) H(+)(in) = a plastoquinol + NADP(+) + n H(+)(out). Functionally, NDH-1 shuttles electrons from an unknown electron donor, via FMN and iron-sulfur (Fe-S) centers, to quinones in the respiratory and/or the photosynthetic chain. The immediate electron acceptor for the enzyme in this species is believed to be plastoquinone. Couples the redox reaction to proton translocation, and thus conserves the redox energy in a proton gradient. Cyanobacterial NDH-1 also plays a role in inorganic carbon-concentration. This is NAD(P)H-quinone oxidoreductase subunit K 2 from Synechocystis sp. (strain ATCC 27184 / PCC 6803 / Kazusa).